Reading from the N-terminus, the 336-residue chain is F-box protein PP2-B1 (336 aa).

The tract at residues 1 to 22 (MEQIHGGDSNSGGGGGGSSRND) is disordered. The span at 9-18 (SNSGGGGGGS) shows a compositional bias: gly residues. The region spanning 29–75 (ASRFDALPEDCISKVISHTSPRDACVVASVSKSVKSAAQSDLVWEMF) is the F-box domain.

In terms of assembly, part of a SCF (ASK-cullin-F-box) protein ligase complex. Interacts with SKP1A/ASK1 and SPK1B/ASK2.

The protein localises to the nucleus. It functions in the pathway protein modification; protein ubiquitination. In terms of biological role, component of SCF(ASK-cullin-F-box) E3 ubiquitin ligase complexes, which may mediate the ubiquitination and subsequent proteasomal degradation of target proteins. The polypeptide is F-box protein PP2-B1 (PP2B1) (Arabidopsis thaliana (Mouse-ear cress)).